A 187-amino-acid polypeptide reads, in one-letter code: Elongation factor P (187 aa).

It belongs to the elongation factor P family.

It localises to the cytoplasm. It participates in protein biosynthesis; polypeptide chain elongation. Its function is as follows. Involved in peptide bond synthesis. Stimulates efficient translation and peptide-bond synthesis on native or reconstituted 70S ribosomes in vitro. Probably functions indirectly by altering the affinity of the ribosome for aminoacyl-tRNA, thus increasing their reactivity as acceptors for peptidyl transferase. This is Elongation factor P from Fusobacterium nucleatum subsp. nucleatum (strain ATCC 25586 / DSM 15643 / BCRC 10681 / CIP 101130 / JCM 8532 / KCTC 2640 / LMG 13131 / VPI 4355).